Reading from the N-terminus, the 579-residue chain is 2-isopropylmalate synthase (579 aa).

Residues 33–308 (PRWLSTDLRD…DPGIDFSDIN (276 aa)) form the Pyruvate carboxyltransferase domain. The Mg(2+) site is built by D42, H247, H249, and N283. Positions 450-579 (SSDLPVPLAS…IVAPLVAAGR (130 aa)) are regulatory domain.

It belongs to the alpha-IPM synthase/homocitrate synthase family. LeuA type 2 subfamily. Homodimer. The cofactor is Mg(2+).

Its subcellular location is the cytoplasm. The catalysed reaction is 3-methyl-2-oxobutanoate + acetyl-CoA + H2O = (2S)-2-isopropylmalate + CoA + H(+). The protein operates within amino-acid biosynthesis; L-leucine biosynthesis; L-leucine from 3-methyl-2-oxobutanoate: step 1/4. Its function is as follows. Catalyzes the condensation of the acetyl group of acetyl-CoA with 3-methyl-2-oxobutanoate (2-ketoisovalerate) to form 3-carboxy-3-hydroxy-4-methylpentanoate (2-isopropylmalate). In Streptosporangium roseum (strain ATCC 12428 / DSM 43021 / JCM 3005 / KCTC 9067 / NCIMB 10171 / NRRL 2505 / NI 9100), this protein is 2-isopropylmalate synthase.